Consider the following 383-residue polypeptide: Carbamoyl phosphate synthase small chain (383 aa).

The tract at residues 1-190 (MPHPSSRQAH…FDQRLKQHPD (190 aa)) is CPSase. Residues Ser-51, Gly-242, and Gly-244 each contribute to the L-glutamine site. The 188-residue stretch at 194–381 (RVVAIDFGIK…VALMADRRDV (188 aa)) folds into the Glutamine amidotransferase type-1 domain. The Nucleophile role is filled by Cys-271. L-glutamine-binding residues include Leu-272, Gln-275, Asn-311, Gly-313, and Phe-314. Active-site residues include His-354 and Glu-356.

Belongs to the CarA family. Composed of two chains; the small (or glutamine) chain promotes the hydrolysis of glutamine to ammonia, which is used by the large (or ammonia) chain to synthesize carbamoyl phosphate. Tetramer of heterodimers (alpha,beta)4.

It carries out the reaction hydrogencarbonate + L-glutamine + 2 ATP + H2O = carbamoyl phosphate + L-glutamate + 2 ADP + phosphate + 2 H(+). The catalysed reaction is L-glutamine + H2O = L-glutamate + NH4(+). The protein operates within amino-acid biosynthesis; L-arginine biosynthesis; carbamoyl phosphate from bicarbonate: step 1/1. Its pathway is pyrimidine metabolism; UMP biosynthesis via de novo pathway; (S)-dihydroorotate from bicarbonate: step 1/3. Functionally, small subunit of the glutamine-dependent carbamoyl phosphate synthetase (CPSase). CPSase catalyzes the formation of carbamoyl phosphate from the ammonia moiety of glutamine, carbonate, and phosphate donated by ATP, constituting the first step of 2 biosynthetic pathways, one leading to arginine and/or urea and the other to pyrimidine nucleotides. The small subunit (glutamine amidotransferase) binds and cleaves glutamine to supply the large subunit with the substrate ammonia. This chain is Carbamoyl phosphate synthase small chain, found in Parasynechococcus marenigrum (strain WH8102).